The primary structure comprises 310 residues: Ribonuclease Z (310 aa).

Zn(2+) is bound by residues His-64, His-66, Asp-68, His-69, His-146, Asp-215, and His-273. The active-site Proton acceptor is Asp-68.

This sequence belongs to the RNase Z family. As to quaternary structure, homodimer. It depends on Zn(2+) as a cofactor.

It catalyses the reaction Endonucleolytic cleavage of RNA, removing extra 3' nucleotides from tRNA precursor, generating 3' termini of tRNAs. A 3'-hydroxy group is left at the tRNA terminus and a 5'-phosphoryl group is left at the trailer molecule.. Functionally, zinc phosphodiesterase, which displays some tRNA 3'-processing endonuclease activity. Probably involved in tRNA maturation, by removing a 3'-trailer from precursor tRNA. The chain is Ribonuclease Z from Aeropyrum pernix (strain ATCC 700893 / DSM 11879 / JCM 9820 / NBRC 100138 / K1).